The following is a 452-amino-acid chain: Maltoporin (452 aa).

A signal peptide spans 1–25; the sequence is MMITLRKLPLAVAVAAGVMSAQAMA.

Belongs to the porin LamB (TC 1.B.3) family. Homotrimer formed of three 18-stranded antiparallel beta-barrels, containing three independent channels.

It is found in the cell outer membrane. It catalyses the reaction beta-maltose(in) = beta-maltose(out). Involved in the transport of maltose and maltodextrins. This Salmonella agona (strain SL483) protein is Maltoporin.